The chain runs to 1367 residues: Collagen alpha-1(XV) chain (1367 aa).

The first 31 residues, 1 to 31, serve as a signal peptide directing secretion; it reads MTHRRTAQGRRPRWLLSIISALLSAVLQTRA. The Laminin G-like domain occupies 54–249; it reads SVSFTTGYGG…SSASGEASGF (196 aa). Residues 229–604 are nonhelical region 1 (NC1); that stretch reads RTPEELCEAQ…DIVGNEDLLR (376 aa). O-linked (Xyl...) (chondroitin sulfate) serine glycans are attached at residues Ser243 and Ser247. A disordered region spans residues 267–319; sequence APPKESHVDPISVPPTSSSPAEDSELSGEPVPEGTPETNLSIIGHSSPEQGSG. N-linked (GlcNAc...) asparagine glycosylation is found at Asn305 and Asn323. Ser341 carries an O-linked (Xyl...) (chondroitin sulfate) serine glycan. 3 N-linked (GlcNAc...) asparagine glycosylation sites follow: Asn348, Asn375, and Asn402. Disordered regions lie at residues 396–446 and 529–784; these read DTPD…SHGE and TAEP…GHVE. Residues 402-429 show a composition bias toward polar residues; sequence NLTTTASGDGEVPTSTDGDTEADSSPTG. The segment covering 434–446 has biased composition (basic and acidic residues); it reads KPREEATLGSHGE. Pro residues predominate over residues 555–564; it reads PSGPPLPTPT. The span at 582-595 shows a compositional bias: gly residues; sequence GPVGGLDEGSGSGD. 2 consecutive Collagen-like domains span residues 605–665 and 666–717; these read GPPG…GMKG and EKGA…PPGP. The tract at residues 605–718 is triple-helical region 1 (COL1); that stretch reads GPPGPPGPPG…PGPPGPPGPG (114 aa). Positions 606 to 616 are enriched in pro residues; it reads PPGPPGPPGSP. The N-linked (GlcNAc...) asparagine glycan is linked to Asn673. Over residues 703–717 the composition is skewed to pro residues; the sequence is MGPPGPPGPPGPPGP. Positions 719-748 are nonhelical region 2 (NC2); sequence CTTELGFEIEGSGDVRLLSKPTISGPTSPS. Ser730 is a glycosylation site (O-linked (Xyl...) (chondroitin sulfate) serine). Residues 737–750 show a composition bias toward low complexity; the sequence is SKPTISGPTSPSGP. The interval 749-783 is triple-helical region 2 (COL2); sequence GPKGEKGEQGAKGERGADGTSTMGPPGPRGPPGHV. Over residues 751–765 the composition is skewed to basic and acidic residues; it reads KGEKGEQGAKGERGA. Residues 784-807 form a nonhelical region 3 (NC3) region; that stretch reads EVLSSSLINITNGSMNFSDIPELM. Residues Asn792, Asn795, and Asn799 are each glycosylated (N-linked (GlcNAc...) asparagine). 2 Collagen-like domains span residues 808-850 and 863-912; these read GPPG…GEPG and KGRK…GDRG. Residues 808–852 are triple-helical region 3 (COL3); the sequence is GPPGPDGVPGLPGFPGPRGPKGDTGVPGFPGLKGEQGEKGEPGAI. Residues 853–863 are nonhelical region 4 (NC4); that stretch reads LTGDVPLEMMK. The segment at 864–934 is triple-helical region 4 (COL4); the sequence is GRKGEPGIHG…PGPPGPPGAV (71 aa). A disordered region spans residues 905-930; the sequence is KGAKGDRGVTLPGPPGLPGPPGPPGP. The span at 916 to 930 shows a compositional bias: pro residues; it reads PGPPGLPGPPGPPGP. Residues 935–968 are nonhelical region 5 (NC5); sequence VNIKGAVFPIPARPHCKTPVGTAHPGDPELVTFH. A triple-helical region 5 (COL5) region spans residues 969–998; sequence GVKGEKGSWGLPGSKGEKGDQGAQGPPGPP. Disordered regions lie at residues 974 to 1000 and 1055 to 1089; these read KGSW…PPVD and GPPG…PAIL. The tract at residues 999–1031 is nonhelical region 6 (NC6); the sequence is VDPAYLRHFLNSLKGENEDASFRGESSNNLFVS. The interval 1032 to 1086 is triple-helical region 6 (COL6); sequence GPPGLPGYPGLVGQKGEAVVGPQGPPGIPGLPGPPGFGRPGVPGPPGPPGPPGPP. The segment covering 1055–1086 has biased composition (pro residues); that stretch reads GPPGIPGLPGPPGFGRPGVPGPPGPPGPPGPP. The nonhelical region 7 (NC7) stretch occupies residues 1087–1096; the sequence is AILGAAVALP. Residues 1097–1111 form a triple-helical region 7 (COL7) region; it reads GPPGPPGQPGLPGSR. Residues 1112 to 1367 form a nonhelical region 8 (NC8) region; that stretch reads NLVTALSDMG…ENSFMTDTRK (256 aa). 2 disulfide bridges follow: Cys1216–Cys1356 and Cys1318–Cys1348.

This sequence belongs to the multiplexin collagen family. In terms of assembly, trimer; disulfide-linked. As to quaternary structure, interacts moderately with EFEMP2. Prolines at the third position of the tripeptide repeating unit (G-X-Y) are hydroxylated in some or all of the chains. In terms of processing, O-glycosylated; contains chondroitin sulfate. Detected in testis, brain, heart, kidney, skeletal muscle and skin (at protein level). Detected in heart and skeletal muscle.

The protein resides in the secreted. It localises to the extracellular space. The protein localises to the extracellular matrix. Its function is as follows. Structural protein that stabilizes microvessels and muscle cells, both in heart and in skeletal muscle. Functionally, restin potently inhibits angiogenesis. This chain is Collagen alpha-1(XV) chain (Col15a1), found in Mus musculus (Mouse).